Reading from the N-terminus, the 78-residue chain is DNA-directed RNA polymerase subunit Rpo5 (78 aa).

Belongs to the archaeal Rpo5/eukaryotic RPB5 RNA polymerase subunit family. Part of the RNA polymerase complex.

The protein resides in the cytoplasm. It catalyses the reaction RNA(n) + a ribonucleoside 5'-triphosphate = RNA(n+1) + diphosphate. DNA-dependent RNA polymerase (RNAP) catalyzes the transcription of DNA into RNA using the four ribonucleoside triphosphates as substrates. This Methanococcus vannielii (strain ATCC 35089 / DSM 1224 / JCM 13029 / OCM 148 / SB) protein is DNA-directed RNA polymerase subunit Rpo5.